An 830-amino-acid chain; its full sequence is Outer dense fiber protein 2 (830 aa).

A phosphoserine mark is found at serine 73 and serine 74. Threonine 92 is modified (phosphothreonine). Serine 95 carries the phosphoserine; by TSSK4 modification. Phosphoserine occurs at positions 106 and 109. Phosphothreonine is present on threonine 110. Phosphoserine is present on residues serine 115 and serine 129. Lysine 138 is covalently cross-linked (Glycyl lysine isopeptide (Lys-Gly) (interchain with G-Cter in SUMO2)). Phosphoserine is present on serine 139. Positions 144–217 form a coiled coil; sequence QKGERQMAKR…MSKLVEAEMD (74 aa). Threonine 231 is subject to Phosphothreonine. 2 coiled-coil regions span residues 245–423 and 461–798; these read DINT…AEQL and EIIV…NYVQ. A phosphoserine mark is found at serine 261 and serine 632. The interval 537 to 701 is interaction with BBOF1; the sequence is KNYEGMIDNY…EAIHQAQLRL (165 aa).

The protein belongs to the ODF2 family. Self-associates. Associates with microtubules and forms a fibrillar structure partially linked to the microtubule network. Interacts via its C-terminus with PLK1. Interacts with ODF1. Interacts with MARK4; the interaction is required for localization of ODF2 to centrioles. Interacts with TSSK4. Interacts with AKNA. Interacts with CFAP58. Interacts with BBOF1. Interacts with CCDC38. Interacts with CCDC42. Post-translationally, tyrosine phosphorylated. Phosphorylated on Ser-95 by TSSK4. In terms of tissue distribution, testis-specific (at protein level). Expressed in spermatids at tubular stage V of the spermatogenic cycle. Highly expressed in the cytoplasm of elongating spermatids (tubular stages X/XI). In step 14/15 spermatids of tubular stage III/IV low expression detected. No expression detected in other testicular cells as well as the early round of spermatids.

It localises to the cytoplasm. Its subcellular location is the cytoskeleton. The protein localises to the microtubule organizing center. The protein resides in the centrosome. It is found in the cell projection. It localises to the cilium. Its subcellular location is the centriole. The protein localises to the spindle pole. The protein resides in the flagellum. Seems to be a major component of sperm tail outer dense fibers (ODF). ODFs are filamentous structures located on the outside of the axoneme in the midpiece and principal piece of the mammalian sperm tail and may help to maintain the passive elastic structures and elastic recoil of the sperm tail. May have a modulating influence on sperm motility. Functions as a general scaffold protein that is specifically localized at the distal/subdistal appendages of mother centrioles. Component of the centrosome matrix required for the localization of PLK1 and NIN to the centrosomes. Required for the formation and/or maintenance of normal CETN1 assembly. This chain is Outer dense fiber protein 2 (Odf2), found in Mus musculus (Mouse).